Here is a 151-residue protein sequence, read N- to C-terminus: Transcriptional repressor NrdR (151 aa).

The segment at 3 to 34 (CPFCHNDQSRVIDSRVIDSGSAIRRRRECTQC) is a zinc-finger region. In terms of domain architecture, ATP-cone spans 46 to 136 (LLVVKRNGLT…VYKSFESADD (91 aa)).

Belongs to the NrdR family. Zn(2+) serves as cofactor.

Its function is as follows. Negatively regulates transcription of bacterial ribonucleotide reductase nrd genes and operons by binding to NrdR-boxes. In Corynebacterium diphtheriae (strain ATCC 700971 / NCTC 13129 / Biotype gravis), this protein is Transcriptional repressor NrdR.